The following is a 507-amino-acid chain: RNA-binding protein MEX3B (507 aa).

A disordered region spans residues 1–22; sequence MPSSLFADMERNGSGGGGGETL. 2 KH domains span residues 59–120 and 155–216; these read MTEC…RREI and QTTI…REEI. Disordered regions lie at residues 256–279 and 426–450; these read NQSSGSRKALSNYRNDSSSSLGSA and SSSSSSSSSSSSSSSSSSSSSGMRR. Residues 426-446 are compositionally biased toward low complexity; sequence SSSSSSSSSSSSSSSSSSSSS. The segment at 456–496 adopts an RING-type zinc-finger fold; that stretch reads CSICFESEVIAALVPCGHNLFCMECANRICEKNQPQCPVCH.

The protein localises to the cytoplasm. It is found in the nucleus. The protein resides in the cytoplasmic granule. Its subcellular location is the P-body. Its function is as follows. RNA-binding protein. May be involved in post-transcriptional regulatory mechanisms. The sequence is that of RNA-binding protein MEX3B (mex3b) from Xenopus laevis (African clawed frog).